A 237-amino-acid chain; its full sequence is uncharacterized protein (237 aa).

An ATP-binding site is contributed by 21–28 (GCDGSGKS).

To E.coli YghR and YghT.

This is an uncharacterized protein from Escherichia coli (strain K12).